The following is a 305-amino-acid chain: MNMQEVYEYLSTVLPEGHVKQDEMLKNHTHIKVGGKADVFVAPTNYDEIQEVIKYANKYNIPVTFLGNGSNVIIKDGGIRGITVSLIHITGVTVTGTTIVAQCGAAIIDVSRIALEHNLTGLEFACGIPGSVGGALYMNAGAYGGEISYVLTEAVVMTGDGELRTLTKEAFEFGYRKSVFANNHYIILEARFELEEGVYEEIKAKMDDLTFKRESKQPLEYPSCGSVFKRPPNNFAGKLIQESGLQGKRIGGVEVSLKHAGFMVNVDNGTAQDYIDLIHFVQKTVEEKFGVKLEREVRIIGEDKE.

The FAD-binding PCMH-type domain occupies 33–197; that stretch reads VGGKADVFVA…LEARFELEEG (165 aa). R176 is an active-site residue. Catalysis depends on S226, which acts as the Proton donor. Residue E296 is part of the active site.

The protein belongs to the MurB family. FAD serves as cofactor.

Its subcellular location is the cytoplasm. The catalysed reaction is UDP-N-acetyl-alpha-D-muramate + NADP(+) = UDP-N-acetyl-3-O-(1-carboxyvinyl)-alpha-D-glucosamine + NADPH + H(+). The protein operates within cell wall biogenesis; peptidoglycan biosynthesis. Its function is as follows. Cell wall formation. The sequence is that of UDP-N-acetylenolpyruvoylglucosamine reductase 2 from Bacillus cereus (strain ATCC 10987 / NRS 248).